We begin with the raw amino-acid sequence, 355 residues long: DNA-directed RNA polymerase subunit alpha (355 aa).

The tract at residues 1–248 (MYYNNDVSLC…EQLQPFISSD (248 aa)) is alpha N-terminal domain (alpha-NTD). The interval 267 to 355 (YDPVLLRKVD…ELAKQHTDED (89 aa)) is alpha C-terminal domain (alpha-CTD).

Belongs to the RNA polymerase alpha chain family. Homodimer. The RNAP catalytic core consists of 2 alpha, 1 beta, 1 beta' and 1 omega subunit. When a sigma factor is associated with the core the holoenzyme is formed, which can initiate transcription.

It carries out the reaction RNA(n) + a ribonucleoside 5'-triphosphate = RNA(n+1) + diphosphate. In terms of biological role, DNA-dependent RNA polymerase catalyzes the transcription of DNA into RNA using the four ribonucleoside triphosphates as substrates. This chain is DNA-directed RNA polymerase subunit alpha, found in Wolbachia pipientis wMel.